The primary structure comprises 525 residues: ALBINO3-like protein 2, chloroplastic (525 aa).

A run of 4 helical transmembrane segments spans residues Trp99 to Leu119, Leu167 to Ile187, Phe217 to Phe237, and Ile262 to Trp282. TPR repeat units lie at residues Pro346 to Tyr379, Val380 to Glu413, Met425 to Gly458, and Phe467 to Tyr500.

The protein belongs to the OXA1/ALB3/YidC (TC 2.A.9.2) family.

Its subcellular location is the plastid. The protein localises to the chloroplast thylakoid membrane. Functionally, probably required for the insertion of integral membrane proteins into the chloroplast thylakoid membranes. This Arabidopsis thaliana (Mouse-ear cress) protein is ALBINO3-like protein 2, chloroplastic (ALB3L2).